The sequence spans 370 residues: S-adenosylmethionine:tRNA ribosyltransferase-isomerase (370 aa).

The protein belongs to the QueA family. In terms of assembly, monomer.

The protein resides in the cytoplasm. The enzyme catalyses 7-aminomethyl-7-carbaguanosine(34) in tRNA + S-adenosyl-L-methionine = epoxyqueuosine(34) in tRNA + adenine + L-methionine + 2 H(+). It participates in tRNA modification; tRNA-queuosine biosynthesis. Functionally, transfers and isomerizes the ribose moiety from AdoMet to the 7-aminomethyl group of 7-deazaguanine (preQ1-tRNA) to give epoxyqueuosine (oQ-tRNA). This chain is S-adenosylmethionine:tRNA ribosyltransferase-isomerase, found in Synechococcus sp. (strain WH7803).